We begin with the raw amino-acid sequence, 307 residues long: Membrane protein insertase YidC 2 (307 aa).

The N-terminal stretch at 1–23 is a signal peptide; it reads MKLTLNRILFSGLALSILFTLTG. The N-palmitoyl cysteine moiety is linked to residue C24. Residue C24 is the site of S-diacylglycerol cysteine attachment. A run of 5 helical transmembrane segments spans residues 58-78, 135-155, 179-199, 209-225, and 231-251; these read LGYG…ILPL, LGGI…AMYF, VLTA…MMAV, TMMY…SFSL, and LYWL…TYLL. A disordered region spans residues 263–307; the sequence is YAKTPPKAYQSTSSRKDVTPSQNMEQANLPKKIKSNRNAGKQRKR. Positions 271-288 are enriched in polar residues; sequence YQSTSSRKDVTPSQNMEQ. Basic residues predominate over residues 293-307; that stretch reads KKIKSNRNAGKQRKR.

This sequence belongs to the OXA1/ALB3/YidC family. Type 2 subfamily.

The protein localises to the cell membrane. In terms of biological role, required for the insertion and/or proper folding and/or complex formation of integral membrane proteins into the membrane. Involved in integration of membrane proteins that insert both dependently and independently of the Sec translocase complex, as well as at least some lipoproteins. This Streptococcus pyogenes serotype M18 (strain MGAS8232) protein is Membrane protein insertase YidC 2.